The primary structure comprises 455 residues: Tumor necrosis factor receptor superfamily member 1A (455 aa).

The signal sequence occupies residues 1 to 29 (MGLSTVPDLLLPLVLLELLVGIYPSGVIG). Over 30–211 (LVPHLGDREK…VKGTEDSGTT (182 aa)) the chain is Extracellular. 4 TNFR-Cys repeats span residues 43 to 82 (VCPQGKYIHPQNNSICCTKCHKGTYLYNDCPGPGQDTDCR), 83 to 125 (ECES…DTVC), 126 to 166 (GCRK…NTVC), and 167 to 196 (TCHAGFFLRENECVSCSNCKKSLECTKLCL). Intrachain disulfides connect C44–C58, C59–C72, C62–C81, C84–C99, C102–C117, C105–C125, and C127–C143. N-linked (GlcNAc...) asparagine glycosylation is present at N54. N145 and N151 each carry an N-linked (GlcNAc...) asparagine glycan. 5 cysteine pairs are disulfide-bonded: C146–C158, C149–C166, C168–C179, C182–C195, and C185–C191. The chain crosses the membrane as a helical span at residues 212-232 (VLLPLVIFFGLCLLSLLFIGL). Residues 233–455 (MYRYQRWKSK…ALPPAPSLLR (223 aa)) are Cytoplasmic-facing. The disordered stretch occupies residues 254 to 273 (EKEGELEGTTTKPLAPNPSF). The interval 338–348 (LQKWEDSAHKP) is N-SMase activation domain (NSD). The Death domain maps to 356–441 (PATLYAVVEN…GCLEDIEEAL (86 aa)). (Microbial infection) N-beta-linked (GlcNAc) arginine glycosylation occurs at R376.

Binding of TNF to the extracellular domain leads to homotrimerization. The aggregated death domains provide a novel molecular interface that interacts specifically with the death domain of TRADD. Various TRADD-interacting proteins such as TRAFS, RIPK1 and possibly FADD, are recruited to the complex by their association with TRADD. This complex activates at least two distinct signaling cascades, apoptosis and NF-kappa-B signaling. Interacts with BAG4, BABAM2, FEM1B, GRB2, SQSTM1 and TRPC4AP. Interacts directly with NOL3 (via CARD domain); inhibits TNF-signaling pathway. Interacts with SH3RF2, TRADD and RIPK1. SH3RF2 facilitates the recruitment of RIPK1 and TRADD to TNFRSF1A in a TNF-alpha-dependent process. Interacts with PGLYRP1; this interaction is important for cell death induction. Interacts (via death domain) with MADD (via death domain). As to quaternary structure, (Microbial infection) Interacts with mumps virus protein SH; this interaction inhibits downstream NF-kappa-B pathway activation. In terms of assembly, (Microbial infection) Interacts with HCV core protein. (Microbial infection) Interacts with human cytomegalovirus/HHV-5 protein UL138. As to quaternary structure, (Microbial infection) Interacts with host TNFRSF1A; this interaction leads to the stimulation of both surface expression and shedding of TNFRSF1A. In terms of processing, the soluble form is produced from the membrane form by proteolytic processing. Post-translationally, (Microbial infection) Glycosylated at Arg-376 by enteropathogenic E.coli protein NleB1 and S.typhimurium protein Ssek3: arginine GlcNAcylation prevents homotypic/heterotypic death domain interactions.

The protein resides in the cell membrane. Its subcellular location is the golgi apparatus membrane. It localises to the secreted. Its function is as follows. Receptor for TNFSF2/TNF-alpha and homotrimeric TNFSF1/lymphotoxin-alpha. The adapter molecule FADD recruits caspase-8 to the activated receptor. The resulting death-inducing signaling complex (DISC) performs caspase-8 proteolytic activation which initiates the subsequent cascade of caspases (aspartate-specific cysteine proteases) mediating apoptosis. Contributes to the induction of non-cytocidal TNF effects including anti-viral state and activation of the acid sphingomyelinase. This chain is Tumor necrosis factor receptor superfamily member 1A (TNFRSF1A), found in Homo sapiens (Human).